Reading from the N-terminus, the 195-residue chain is Probable DNA-directed RNA polymerase subunit delta (195 aa).

The region spanning 14 to 81 is the HTH HARE-type domain; sequence LSMIEVAHAI…GDNTWGLRAW (68 aa). The tract at residues 91–195 is disordered; the sequence is TVGETEDEED…DEEDKEDDEE (105 aa). Acidic residues-rich tracts occupy residues 116–171 and 179–195; these read TDDD…EDQL and FGDD…DDEE.

The protein belongs to the RpoE family. As to quaternary structure, RNAP is composed of a core of 2 alpha, a beta and a beta' subunits. The core is associated with a delta subunit and one of several sigma factors.

Its function is as follows. Participates in both the initiation and recycling phases of transcription. In the presence of the delta subunit, RNAP displays an increased specificity of transcription, a decreased affinity for nucleic acids, and an increased efficiency of RNA synthesis because of enhanced recycling. The protein is Probable DNA-directed RNA polymerase subunit delta of Limosilactobacillus fermentum (strain NBRC 3956 / LMG 18251) (Lactobacillus fermentum).